The following is a 272-amino-acid chain: Phosphoglycolate phosphatase (272 aa).

Asp19 serves as the catalytic Nucleophile. Mg(2+) contacts are provided by Asp19, Asp21, and Asp182.

This sequence belongs to the HAD-like hydrolase superfamily. CbbY/CbbZ/Gph/YieH family. Mg(2+) is required as a cofactor.

It carries out the reaction 2-phosphoglycolate + H2O = glycolate + phosphate. Its pathway is organic acid metabolism; glycolate biosynthesis; glycolate from 2-phosphoglycolate: step 1/1. Functionally, specifically catalyzes the dephosphorylation of 2-phosphoglycolate. Is involved in the dissimilation of the intracellular 2-phosphoglycolate formed during the DNA repair of 3'-phosphoglycolate ends, a major class of DNA lesions induced by oxidative stress. In Pseudomonas fluorescens (strain Pf0-1), this protein is Phosphoglycolate phosphatase.